Reading from the N-terminus, the 125-residue chain is Small ribosomal subunit protein uS13 (125 aa).

The tract at residues 90 to 125 is disordered; that stretch reads QRHRKGLPVRGQRTKTNARTRKGPKRTVAGKKKATK.

Belongs to the universal ribosomal protein uS13 family. Part of the 30S ribosomal subunit. Forms a loose heterodimer with protein S19. Forms two bridges to the 50S subunit in the 70S ribosome.

Located at the top of the head of the 30S subunit, it contacts several helices of the 16S rRNA. In the 70S ribosome it contacts the 23S rRNA (bridge B1a) and protein L5 of the 50S subunit (bridge B1b), connecting the 2 subunits; these bridges are implicated in subunit movement. Contacts the tRNAs in the A and P-sites. The chain is Small ribosomal subunit protein uS13 from Bifidobacterium longum subsp. infantis (strain ATCC 15697 / DSM 20088 / JCM 1222 / NCTC 11817 / S12).